A 665-amino-acid polypeptide reads, in one-letter code: Envelope glycoprotein (665 aa).

An N-terminal signal peptide occupies residues 1–33 (MARSTLSKPLKNKVNPRGPLIPLILLMLRGVST). The receptor-binding domain (RBD) stretch occupies residues 34–267 (ASPGSSPHQV…RYQNLGPRVP (234 aa)). At 34 to 610 (ASPGSSPHQV…FNRSPWFTTL (577 aa)) the chain is on the extracellular side. Asn45 carries N-linked (GlcNAc...) asparagine; by host glycosylation. 5 disulfides stabilise this stretch: Cys79/Cys129, Cys105/Cys118, Cys106/Cys114, Cys152/Cys172, and Cys164/Cys177. Asp117 serves as a coordination point for Zn(2+). A glycan (N-linked (GlcNAc...) asparagine; by host) is linked at Asn199. Residues Cys209 and Cys215 are joined by a disulfide bond. The interval 268–309 (IGPNPVLADQQPLSKPKPVKSPSVTKPPSGTPLSPTQLPPAG) is disordered. Over residues 281–299 (SKPKPVKSPSVTKPPSGTP) the composition is skewed to low complexity. The N-linked (GlcNAc...) asparagine; by host glycan is linked to Asn326. Cystine bridges form between Cys336–Cys339, Cys336–Cys563, Cys366–Cys420, Cys385–Cys397, Cys427–Cys440, and Cys555–Cys562. Residues 336 to 339 (CWLC) carry the CXXC motif. Residues Asn358 and Asn365 are each glycosylated (N-linked (GlcNAc...) asparagine; by host). Residues Asn398 and Asn434 are each glycosylated (N-linked (GlcNAc...) asparagine; by host). The segment at 472-492 (VSLTLALLLGGLTMGGIAAGI) is fusion peptide. Residues 500–537 (MATQQFQQLQAAVQDDLREVEKSISNLEKSLTSLSEVV) adopt a coiled-coil conformation. Residues 538–554 (LQNRRGLDLLFLKEGGL) form an immunosuppression region. The CX6CC motif lies at 555–563 (CAALKEECC). A helical transmembrane segment spans residues 611-631 (ISTIMGPLIVLLMILLFGPCI). Cys630 carries the S-palmitoyl cysteine; by host lipid modification. The Cytoplasmic portion of the chain corresponds to 632–665 (LNRLVQFVKDRISVVQALVLTQQYHQLKPIEYEP). The short motif at 655–658 (YHQL) is the YXXL motif; contains endocytosis signal element.

In terms of assembly, the mature envelope protein (Env) consists of a trimer of SU-TM heterodimers attached by a labile interchain disulfide bond. The activated Env consists of SU monomers and TM trimers. Specific enzymatic cleavages in vivo yield mature proteins. Envelope glycoproteins are synthesized as an inactive precursor that is N-glycosylated and processed likely by host cell furin or by a furin-like protease in the Golgi to yield the mature SU and TM proteins. The cleavage site between SU and TM requires the minimal sequence [KR]-X-[KR]-R. The R-peptide is released from the C-terminus of the cytoplasmic tail of the TM protein upon particle formation as a result of proteolytic cleavage by the viral protease. Cleavage of this peptide is required for TM to become fusogenic. In terms of processing, the CXXC motif is highly conserved across a broad range of retroviral envelope proteins. It is thought to participate in the formation of a labile disulfide bond possibly with the CX6CC motif present in the transmembrane protein. Isomerization of the intersubunit disulfide bond to an SU intrachain disulfide bond is thought to occur upon receptor recognition in order to allow membrane fusion. Post-translationally, the transmembrane protein is palmitoylated. The R-peptide is palmitoylated.

Its subcellular location is the virion membrane. The protein localises to the host cell membrane. Its function is as follows. The surface protein (SU) attaches the virus to the host cell by binding to its receptor. Interaction with HECT ubiquitin ligases activates a thiol in a CXXC motif of the C-terminal domain, where the other Cys residue participates in the formation of the intersubunit disulfide. The activated thiol will attack the disulfide and cause its isomerization into a disulfide isomer within the motif. This leads to SU displacement and TM refolding, and is thought to activate its fusogenic potential by unmasking its fusion peptide. Fusion occurs at the host cell plasma membrane. The transmembrane protein (TM) acts as a class I viral fusion protein. Under the current model, the protein has at least 3 conformational states: pre-fusion native state, pre-hairpin intermediate state, and post-fusion hairpin state. During viral and target cell membrane fusion, the coiled coil regions (heptad repeats) assume a trimer-of-hairpins structure, positioning the fusion peptide in close proximity to the C-terminal region of the ectodomain. The formation of this structure appears to drive apposition and subsequent fusion of viral and target cell membranes. Membranes fusion leads to delivery of the nucleocapsid into the cytoplasm. This Mus musculus (Mouse) protein is Envelope glycoprotein (env).